A 112-amino-acid chain; its full sequence is M-myrmeciitoxin-Mp1 (112 aa).

An N-terminal signal peptide occupies residues 1–26; that stretch reads MKLSCLLLTLTIIFVLTIVHAPNVEA. A propeptide spanning residues 27-56 is cleaved from the precursor; the sequence is KDLADPESEAVGFADAFGEADAVGEADPNA. The tract at residues 57 to 78 is critical for cytotoxic activity; that stretch reads GLGSVFGRLARILGRVIPKVAK. The igE-binding determinant stretch occupies residues 93–106; sequence KEAIPMAVEMAKSQ.

Belongs to the formicidae venom precursor-01 superfamily. Ant pilosulin family. As to expression, expressed by the venom gland.

The protein resides in the secreted. Functionally, has strong cytotoxic and hemolytic activities. Is more potent against mononuclear leukocytes than against granulocytes. The synthesized peptide 57-76 shows a potent and broad spectrum antimicrobial activity against both Gram-positive and Gram-negative bacteria, and also against the fungus C.albicans. Adopts an alpha-helical structure. The polypeptide is M-myrmeciitoxin-Mp1 (Myrmecia pilosula (Jack jumper ant)).